Consider the following 151-residue polypeptide: Deoxyuridine 5'-triphosphate nucleotidohydrolase (151 aa).

Residues arginine 70–glycine 72, asparagine 83, leucine 87–aspartate 89, and methionine 97 each bind substrate.

It belongs to the dUTPase family. In terms of assembly, homotrimer. Requires Mg(2+) as cofactor.

The catalysed reaction is dUTP + H2O = dUMP + diphosphate + H(+). It functions in the pathway pyrimidine metabolism; dUMP biosynthesis; dUMP from dCTP (dUTP route): step 2/2. This enzyme is involved in nucleotide metabolism: it produces dUMP, the immediate precursor of thymidine nucleotides and it decreases the intracellular concentration of dUTP so that uracil cannot be incorporated into DNA. The chain is Deoxyuridine 5'-triphosphate nucleotidohydrolase from Escherichia coli (strain K12 / MC4100 / BW2952).